We begin with the raw amino-acid sequence, 486 residues long: UDP-N-acetylmuramate--L-alanine ligase (486 aa).

An ATP-binding site is contributed by 129–135 (GTHGKTT).

This sequence belongs to the MurCDEF family.

The protein localises to the cytoplasm. The catalysed reaction is UDP-N-acetyl-alpha-D-muramate + L-alanine + ATP = UDP-N-acetyl-alpha-D-muramoyl-L-alanine + ADP + phosphate + H(+). It functions in the pathway cell wall biogenesis; peptidoglycan biosynthesis. Functionally, cell wall formation. This is UDP-N-acetylmuramate--L-alanine ligase from Vibrio atlanticus (strain LGP32) (Vibrio splendidus (strain Mel32)).